Reading from the N-terminus, the 231-residue chain is 2-C-methyl-D-erythritol 2,4-cyclodiphosphate synthase, chloroplastic (231 aa).

The N-terminal 52 residues, 1-52, are a transit peptide targeting the chloroplast; sequence MATSSTQLLLSSSSLFHSQITKKPFLLPATKIGVWRPKKSLSLSCRPSASVS. A divalent metal cation contacts are provided by D82 and H84. Substrate-binding positions include 82 to 84, 108 to 109, 112 to 120, 130 to 132, 135 to 139, D139, 174 to 180, and 205 to 209; these read DLH, HS, DVLLHCVVD, DIG, FPDSD, LQRPKIS, and AKTHE. H116 serves as a coordination point for a divalent metal cation.

Belongs to the IspF family. As to quaternary structure, homotrimer. Requires a divalent metal cation as cofactor.

Its subcellular location is the plastid. It is found in the chloroplast stroma. It catalyses the reaction 4-CDP-2-C-methyl-D-erythritol 2-phosphate = 2-C-methyl-D-erythritol 2,4-cyclic diphosphate + CMP. It participates in isoprenoid biosynthesis; isopentenyl diphosphate biosynthesis via DXP pathway; isopentenyl diphosphate from 1-deoxy-D-xylulose 5-phosphate: step 4/6. Functionally, enzyme of the plastid non-mevalonate pathway for isoprenoid biosynthesis that converts 4-diphosphocytidyl-2C-methyl-D-erythritol 2-phosphate into 2C-methyl-D-erythritol 2,4-cyclodiphosphate and CMP. Is essential for chloroplast development. This chain is 2-C-methyl-D-erythritol 2,4-cyclodiphosphate synthase, chloroplastic, found in Arabidopsis thaliana (Mouse-ear cress).